Here is a 262-residue protein sequence, read N- to C-terminus: Protein N-terminal and lysine N-methyltransferase EFM7 (262 aa).

S-adenosyl-L-methionine is bound by residues W59, 86–88, D108, W143, and S171; that span reads GAA.

The protein belongs to the class I-like SAM-binding methyltransferase superfamily. EFM7 family.

It localises to the cytoplasm. Its function is as follows. S-adenosyl-L-methionine-dependent protein methyltransferase that trimethylates the N-terminal glycine 'Gly-2' of elongation factor 1-alpha, before also catalyzing the mono- and dimethylation of 'Lys-3'. In Candida albicans (strain SC5314 / ATCC MYA-2876) (Yeast), this protein is Protein N-terminal and lysine N-methyltransferase EFM7.